The chain runs to 671 residues: Spartin (671 aa).

Met1 is modified (N-acetylmethionine). The MIT domain occupies 16–94 (IKEAYEKAFM…LQNVRTRLEI (79 aa)). Residues 110 to 175 (VPKLYPEFPP…CPAEAPPAYS (66 aa)) form a disordered region. Basic and acidic residues predominate over residues 118–128 (PPKDACKKSPE). Ser126 bears the Phosphoserine mark. The segment covering 143-158 (GSASAACAGPSGAPSA) has biased composition (low complexity). The segment covering 159–174 (LPVPSPSCPAEAPPAY) has biased composition (pro residues). The interval 190–385 (DSGEFSSVGE…SIDQGSKDAR (196 aa)) is ubiquitin-binding region (UBR) domain. Positions 193-200 (EFSSVGED) match the LC3-interacting region (LIR); mediates interaction with MAP1LC3A AND MAP1LC3C motif. The tract at residues 346-421 (FQIPGRSSHP…SSEEKSKELP (76 aa)) is disordered. Lys360 is covalently cross-linked (Glycyl lysine isopeptide (Lys-Gly) (interchain with G-Cter in ubiquitin)). The span at 369–379 (QSSSSGSSIDQ) shows a compositional bias: low complexity. Over residues 384 to 393 (ARHKGKRGKK) the composition is skewed to basic residues. Residues 431 to 615 (ILSGASWVSW…YNIDNIGIKA (185 aa)) form the Senescence domain. The segment at 435 to 507 (ASWVSWGLVK…LVDGVCTVAN (73 aa)) is required for localization to lipid droplets. Ser474 carries the phosphoserine modification. Residues 635–671 (VERPQRESQGGATSTEGRRDIGKQVEEEKPGAGKKDK) form a disordered region. The span at 650-671 (EGRRDIGKQVEEEKPGAGKKDK) shows a compositional bias: basic and acidic residues.

Interacts with ITCH and WWP1. Interacts (via MIT domain) with IST1; leading to the recruitment of SPART to midbodies. Interacts with MAP1LC3A and MAP1LC3C. Ubiquitinated; ubiquitination does not require ITCH and WWP1. In terms of tissue distribution, brain (at protein level).

It localises to the cytoplasm. The protein resides in the midbody. Its subcellular location is the lipid droplet. Functionally, lipophagy receptor that plays an important role in lipid droplet (LD) turnover in motor neurons. Localizes to LDs and interacts with components of the autophagy machinery, such as MAP1LC3A/C proteins to deliver LDs to autophagosomes for degradation via lipophagy. Lipid transfer protein required for lipid droplet degradation, including by lipophagy. Can bind and transfer all lipid species found in lipid droplets, from phospholipids to triglycerides and sterol esters but the direction of lipid transfer by spartin and its cargos are unknown. May be implicated in endosomal trafficking, or microtubule dynamics, or both. Participates in cytokinesis. This chain is Spartin, found in Mus musculus (Mouse).